The primary structure comprises 475 residues: 3-isopropylmalate dehydratase large subunit (475 aa).

The [4Fe-4S] cluster site is built by C348, C408, and C411.

The protein belongs to the aconitase/IPM isomerase family. LeuC type 1 subfamily. As to quaternary structure, heterodimer of LeuC and LeuD. Requires [4Fe-4S] cluster as cofactor.

The catalysed reaction is (2R,3S)-3-isopropylmalate = (2S)-2-isopropylmalate. Its pathway is amino-acid biosynthesis; L-leucine biosynthesis; L-leucine from 3-methyl-2-oxobutanoate: step 2/4. Catalyzes the isomerization between 2-isopropylmalate and 3-isopropylmalate, via the formation of 2-isopropylmaleate. This is 3-isopropylmalate dehydratase large subunit from Acidobacterium capsulatum (strain ATCC 51196 / DSM 11244 / BCRC 80197 / JCM 7670 / NBRC 15755 / NCIMB 13165 / 161).